Consider the following 1707-residue polypeptide: Kinesin-like protein KIF1A (1707 aa).

The 350-residue stretch at 5–354 (SVKVAVRVRP…LRYADRAKQI (350 aa)) folds into the Kinesin motor domain. 5 residues coordinate ATP: Gly-102, Lys-103, Ser-104, Tyr-105, and Ser-215. Position 104 (Ser-104) interacts with Mg(2+). Residues 439–466 (SEEAIERLKETEKIIAELNETWEEKLRR) adopt a coiled-coil conformation. The FHA domain maps to 525–581 (TRVGREDAERRQDIVLSGHFIKEEHCIFRSDSRGGGEAVVTLEPCEGADTYVNGKKV). 2 coiled-coil regions span residues 637–671 (EKQGIDMKQEMEQRLQELEDQYRREREEATYLLEQ) and 811–831 (LEKLRQRLDLMREMYDRAAEV). The segment at 657–1105 (QYRREREEAT…LCKDVLSPLR (449 aa)) is required for interaction with CALM1, PPFIA2 and TANC2. Disordered regions lie at residues 1424–1462 (PVPEVLSPASSEDSESRSSSGASSPLSAEGQPSPLEVPN) and 1536–1576 (TDVR…EKEP). Over residues 1429–1453 (LSPASSEDSESRSSSGASSPLSAEG) the composition is skewed to low complexity. The 99-residue stretch at 1592 to 1690 (IVSKKGYLHF…WLYAFNPLLA (99 aa)) folds into the PH domain.

This sequence belongs to the TRAFAC class myosin-kinesin ATPase superfamily. Kinesin family. Unc-104 subfamily. Dimeric motor; dimerization is required for ATP-driven processive motility. Monomer in vitro. Interacts with PPFIA1 and PPFIA4. Interacts with CALM1; the interaction is increased in presence of calcium and increases neuronal dense core vesicles motility. Interacts with PPFIA2 and TANC2; both interactions allow the recruitment of neuronal dense core vesicles to dendritic spines and decrease in presence of calcium. Interacts with SYT4 (unphosphorylated) and SYT11; both interactions increase in presence of calcium. Interacts with MADD.

It is found in the cytoplasm. It localises to the cytoskeleton. The protein resides in the cell projection. The protein localises to the neuron projection. Its subcellular location is the axon. It is found in the perinuclear region. It localises to the synapse. The protein resides in the cytoplasmic vesicle. The protein localises to the secretory vesicle. Its subcellular location is the neuronal dense core vesicle membrane. The catalysed reaction is ATP + H2O + a kinesin associated with a microtubule at position (n) = ADP + phosphate a kinesin associated with a microtubule at position (n+1, toward the plus end).. Kinesin motor with a plus-end-directed microtubule motor activity, involved in anterograde axonal transport of synaptic vesicle precursors. Also required for neuronal dense core vesicles (DCVs) transport to the dendritic spines and axons. The interaction calcium-dependent with CALM1 increases vesicle motility and interaction with the scaffolding proteins PPFIA2 and TANC2 recruits DCVs to synaptic sites. This chain is Kinesin-like protein KIF1A, found in Rattus norvegicus (Rat).